Consider the following 257-residue polypeptide: Imidazole glycerol phosphate synthase subunit HisF (257 aa).

Active-site residues include D11 and D130.

The protein belongs to the HisA/HisF family. Heterodimer of HisH and HisF.

It localises to the cytoplasm. The enzyme catalyses 5-[(5-phospho-1-deoxy-D-ribulos-1-ylimino)methylamino]-1-(5-phospho-beta-D-ribosyl)imidazole-4-carboxamide + L-glutamine = D-erythro-1-(imidazol-4-yl)glycerol 3-phosphate + 5-amino-1-(5-phospho-beta-D-ribosyl)imidazole-4-carboxamide + L-glutamate + H(+). Its pathway is amino-acid biosynthesis; L-histidine biosynthesis; L-histidine from 5-phospho-alpha-D-ribose 1-diphosphate: step 5/9. In terms of biological role, IGPS catalyzes the conversion of PRFAR and glutamine to IGP, AICAR and glutamate. The HisF subunit catalyzes the cyclization activity that produces IGP and AICAR from PRFAR using the ammonia provided by the HisH subunit. The polypeptide is Imidazole glycerol phosphate synthase subunit HisF (Actinobacillus pleuropneumoniae serotype 7 (strain AP76)).